Consider the following 812-residue polypeptide: MAAPAGGLGDAELREAQRDYLDFLDDEEDQGVYHGKVRDMISDNQYRLLVNINDLRRRNEKRANRLLSNAFEELIAFQRALKDFVASVDATYAKQYEDFYIGLEGSFGSKHVSPRTLTACFLSCIVCVEGIVTKCSLIRPKVVRSVHYCPATKKTIERRYTDLTSLDAFPSSTVYPTKDEENNPLETEYGLSVYKDHQTISIQEMPEKAPAGQLPRSVDVILDDDLVDKVKPGDRIQVVGTYRCLPGKKGGYTSGTFRTILIACHIKQMSKDARPLYSANDVAKIKRFSKSRSKDIFNQLARSLAPSIHGHEFIKKALLCMLLGGVEKVLENGSRIRGDINILLIGDPSVAKSQLLRYVLGTAPRAVGTTGRGSSGVGLTAAVTTDQETGERRLEAGAMVLADRGVVCIDEFDKMSDIDRTAIHEVMEQGRVTIAKAGIHARLNSRCSVLAAANPVYGRYDQYKTPMENIGLQDSLLSRFDLLFIMLDQMDSEQDREISDHVLRMHRYRNPNEQDGDAMPLGSAVEILATDDPDFAQEEEQELQVYEKHDDLLHGPNRRKEKIVSMEFMRKYIHVAKMIKPVLTQESADYIAEEYSSLRSQNQMNSDIARTSPVTARTLETLIRLSTAHAKARMSKTVDLQDAEAALELVQFAYFKKVLEKEKKRKKQVEDDSETEKEEEEEETQPEKEGRKQRRKKARTEGEEESYDPYDFSDAEQEMPEVQAHTPKTPESSATGEAKKPELADPRLKAFKAALLEVFKSSHAQSVGLKNVMESINRDNPEPFSLAGVKVALAHMQDDNQIMVSDDIIFLI.

Residues 296–503 (IFNQLARSLA…QDREISDHVL (208 aa)) enclose the MCM domain. Gln-354, Leu-394, Glu-395, Ala-396, and Ala-398 together coordinate ADP. The short motif at 478–481 (SRFD) is the Arginine finger element. ATP contacts are provided by Ala-524 and Arg-665. The tract at residues 663–741 (KKRKKQVEDD…SSATGEAKKP (79 aa)) is disordered. Acidic residues-rich tracts occupy residues 671–684 (DDSE…EEET) and 702–719 (GEEE…EQEM).

Belongs to the MCM family. As to quaternary structure, component of the MCM2-7 complex. The complex forms a toroidal hexameric ring with the proposed subunit order MCM2-MCM6-MCM4-MCM7-MCM3-MCM5. Component of the CMG helicase complex, a hexameric ring of related MCM2-7 subunits stabilized by CDC45 and the tetrameric GINS complex.

It localises to the nucleus. Its subcellular location is the chromosome. The catalysed reaction is ATP + H2O = ADP + phosphate + H(+). In terms of biological role, acts as a component of the MCM2-7 complex (MCM complex) which is the replicative helicase essential for 'once per cell cycle' DNA replication initiation and elongation in eukaryotic cells. Core component of CDC45-MCM-GINS (CMG) helicase, the molecular machine that unwinds template DNA during replication, and around which the replisome is built. The active ATPase sites in the MCM2-7 ring are formed through the interaction surfaces of two neighboring subunits such that a critical structure of a conserved arginine finger motif is provided in trans relative to the ATP-binding site of the Walker A box of the adjacent subunit. The six ATPase active sites, however, are likely to contribute differentially to the complex helicase activity. Required for the entry in S phase and for cell division. This Gallus gallus (Chicken) protein is DNA replication licensing factor MCM3 (MCM3).